A 268-amino-acid polypeptide reads, in one-letter code: Ribosomal RNA small subunit methyltransferase A (268 aa).

Asparagine 16, leucine 18, glycine 43, glutamate 64, aspartate 89, and asparagine 110 together coordinate S-adenosyl-L-methionine.

Belongs to the class I-like SAM-binding methyltransferase superfamily. rRNA adenine N(6)-methyltransferase family. RsmA subfamily.

The protein localises to the cytoplasm. The enzyme catalyses adenosine(1518)/adenosine(1519) in 16S rRNA + 4 S-adenosyl-L-methionine = N(6)-dimethyladenosine(1518)/N(6)-dimethyladenosine(1519) in 16S rRNA + 4 S-adenosyl-L-homocysteine + 4 H(+). Functionally, specifically dimethylates two adjacent adenosines (A1518 and A1519) in the loop of a conserved hairpin near the 3'-end of 16S rRNA in the 30S particle. May play a critical role in biogenesis of 30S subunits. The sequence is that of Ribosomal RNA small subunit methyltransferase A from Pseudomonas syringae pv. syringae (strain B728a).